A 193-amino-acid chain; its full sequence is MNVTKAEIAVSAVKPEQYPDGALPEFALAGRSNVGKSSFINKMINRKNLARTSSKPGKTQTLNFYLINESFYFVDVPGYGFARVSKKEREAWGKMMETYFTTREQLRAVVLIVDLRHPPTKDDVMMYEFLKHYQIPTIIIATKADKVPKGKWQKHLKVVRETLNIIEDDKLILFSAETGQGKEEAWAALERFL.

An EngB-type G domain is found at Ala22 to Leu193. GTP contacts are provided by residues Gly30–Ser37, Gly57–Thr61, Asp75–Gly78, Thr142–Asp145, and Phe174–Ala176. Positions 37 and 59 each coordinate Mg(2+).

The protein belongs to the TRAFAC class TrmE-Era-EngA-EngB-Septin-like GTPase superfamily. EngB GTPase family. The cofactor is Mg(2+).

Necessary for normal cell division and for the maintenance of normal septation. The sequence is that of Probable GTP-binding protein EngB from Geobacillus sp. (strain WCH70).